Reading from the N-terminus, the 209-residue chain is MSGKKRTASSSRWMQEHFDDHYVKLAQKRGFRSRAAFKIEEIQEKDKLIRPGMTVVDLGAAPGGWSQVAVKLAGDKGKVIACDILPMDPIVGVDFLQGDFREEKVLDALLTRVGDAKVDVVLSDMAPNMSGTGGVDQPRAMYLVELALDMCHQVLAPNGCFAVKVFQGEGFDEYMKAVKEAFKTVKTRKPDSSRPRSREVYLVATGYKL.

5 residues coordinate S-adenosyl-L-methionine: Gly63, Trp65, Asp83, Asp99, and Asp124. Lys164 (proton acceptor) is an active-site residue.

The protein belongs to the class I-like SAM-binding methyltransferase superfamily. RNA methyltransferase RlmE family.

Its subcellular location is the cytoplasm. The catalysed reaction is uridine(2552) in 23S rRNA + S-adenosyl-L-methionine = 2'-O-methyluridine(2552) in 23S rRNA + S-adenosyl-L-homocysteine + H(+). Specifically methylates the uridine in position 2552 of 23S rRNA at the 2'-O position of the ribose in the fully assembled 50S ribosomal subunit. The sequence is that of Ribosomal RNA large subunit methyltransferase E from Shewanella piezotolerans (strain WP3 / JCM 13877).